Here is a 281-residue protein sequence, read N- to C-terminus: Src-like-adapter (281 aa).

The disordered stretch occupies residues 1–20 (MGNSMKSTSPPSERPLSSSE). Gly2 carries the N-myristoyl glycine lipid modification. Residues 7–20 (STSPPSERPLSSSE) are compositionally biased toward low complexity. Positions 22–82 (LESDFLAVLT…PGICVARVYH (61 aa)) constitute an SH3 domain. Positions 84–175 (WLFEGLGRDK…GLCCVLTTPC (92 aa)) constitute an SH2 domain. The SLA C-terminal stretch occupies residues 190-281 (CTSPGSPVTL…FFSAPQYFED (92 aa)). Ser258 is modified (phosphoserine). Residue Tyr278 is modified to Phosphotyrosine.

Homodimer. Interacts with phosphorylated CBL, SYK and LAT. Homodimerization and interaction with phosphorylated CBL occurs via its C-terminal domain. Interacts with PDGFRB and EPHA2. Interacts with phosphorylated proteins ZAP70; CD3Z; VAV1 and LCP2 via its SH2 domain. As to expression, predominantly expressed in lymphoid tissues. Highly expressed in spleen, thymus and lymph nodes. Weakly expressed in lung and brain. Expressed in T-cells and at low level in B-cells.

The protein localises to the cytoplasm. It localises to the endosome. Its function is as follows. Adapter protein, which negatively regulates T-cell receptor (TCR) signaling. Inhibits T-cell antigen-receptor induced activation of nuclear factor of activated T-cells. Involved in the negative regulation of positive selection and mitosis of T-cells. May act by linking signaling proteins such as ZAP70 with CBL, leading to a CBL dependent degradation of signaling proteins. The protein is Src-like-adapter (Sla) of Mus musculus (Mouse).